The following is a 344-amino-acid chain: Dihydroorotase (344 aa).

Positions 14 and 16 each coordinate Zn(2+). Residues 16 to 18 (HFR) and asparagine 42 each bind substrate. Zn(2+) contacts are provided by lysine 100, histidine 137, and histidine 175. Lysine 100 bears the N6-carboxylysine mark. Histidine 137 is a binding site for substrate. Residue leucine 220 coordinates substrate. Aspartate 248 provides a ligand contact to Zn(2+). Residue aspartate 248 is part of the active site. The substrate site is built by histidine 252 and alanine 264.

It belongs to the metallo-dependent hydrolases superfamily. DHOase family. Class II DHOase subfamily. Homodimer. Requires Zn(2+) as cofactor.

The catalysed reaction is (S)-dihydroorotate + H2O = N-carbamoyl-L-aspartate + H(+). Its pathway is pyrimidine metabolism; UMP biosynthesis via de novo pathway; (S)-dihydroorotate from bicarbonate: step 3/3. Functionally, catalyzes the reversible cyclization of carbamoyl aspartate to dihydroorotate. The polypeptide is Dihydroorotase (Alcanivorax borkumensis (strain ATCC 700651 / DSM 11573 / NCIMB 13689 / SK2)).